A 337-amino-acid polypeptide reads, in one-letter code: Dihydroorotate dehydrogenase (quinone) (337 aa).

FMN is bound by residues alanine 62–lysine 66 and threonine 86. Substrate is bound at residue lysine 66. Residue asparagine 111–phenylalanine 115 coordinates substrate. FMN-binding residues include asparagine 139 and asparagine 172. Asparagine 172 is a substrate binding site. The active-site Nucleophile is the serine 175. Residue asparagine 177 participates in substrate binding. The FMN site is built by lysine 217 and threonine 245. Residue asparagine 246–threonine 247 coordinates substrate. Residues glycine 268, glycine 297, and tyrosine 318–serine 319 each bind FMN.

This sequence belongs to the dihydroorotate dehydrogenase family. Type 2 subfamily. As to quaternary structure, monomer. FMN serves as cofactor.

The protein resides in the cell membrane. The enzyme catalyses (S)-dihydroorotate + a quinone = orotate + a quinol. It functions in the pathway pyrimidine metabolism; UMP biosynthesis via de novo pathway; orotate from (S)-dihydroorotate (quinone route): step 1/1. Functionally, catalyzes the conversion of dihydroorotate to orotate with quinone as electron acceptor. The polypeptide is Dihydroorotate dehydrogenase (quinone) (Methylobacillus flagellatus (strain ATCC 51484 / DSM 6875 / VKM B-1610 / KT)).